The primary structure comprises 193 residues: Phosphoheptose isomerase (193 aa).

The SIS domain maps to Leu-37 to Ala-193. Asn-52 to Gly-54 contacts substrate. His-61 and Glu-65 together coordinate Zn(2+). Residues Glu-65, Asn-93 to Asp-94, Ser-119 to Ser-121, Ser-124, and Gln-172 contribute to the substrate site. Gln-172 and His-180 together coordinate Zn(2+).

Belongs to the SIS family. GmhA subfamily. In terms of assembly, homotetramer. It depends on Zn(2+) as a cofactor.

Its subcellular location is the cytoplasm. It catalyses the reaction 2 D-sedoheptulose 7-phosphate = D-glycero-alpha-D-manno-heptose 7-phosphate + D-glycero-beta-D-manno-heptose 7-phosphate. It participates in carbohydrate biosynthesis; D-glycero-D-manno-heptose 7-phosphate biosynthesis; D-glycero-alpha-D-manno-heptose 7-phosphate and D-glycero-beta-D-manno-heptose 7-phosphate from sedoheptulose 7-phosphate: step 1/1. Catalyzes the isomerization of sedoheptulose 7-phosphate in D-glycero-D-manno-heptose 7-phosphate. This chain is Phosphoheptose isomerase, found in Yersinia pseudotuberculosis serotype O:1b (strain IP 31758).